A 344-amino-acid chain; its full sequence is tRNA N6-adenosine threonylcarbamoyltransferase (344 aa).

Residues His119 and His123 each contribute to the Fe cation site. Residues 141–145, Asp174, Gly187, Asp191, and Asn280 contribute to the substrate site; that span reads VVSGG. Asp310 lines the Fe cation pocket.

It belongs to the KAE1 / TsaD family. Fe(2+) serves as cofactor.

The protein resides in the cytoplasm. It carries out the reaction L-threonylcarbamoyladenylate + adenosine(37) in tRNA = N(6)-L-threonylcarbamoyladenosine(37) in tRNA + AMP + H(+). Functionally, required for the formation of a threonylcarbamoyl group on adenosine at position 37 (t(6)A37) in tRNAs that read codons beginning with adenine. Is involved in the transfer of the threonylcarbamoyl moiety of threonylcarbamoyl-AMP (TC-AMP) to the N6 group of A37, together with TsaE and TsaB. TsaD likely plays a direct catalytic role in this reaction. The chain is tRNA N6-adenosine threonylcarbamoyltransferase from Listeria monocytogenes serovar 1/2a (strain ATCC BAA-679 / EGD-e).